The sequence spans 250 residues: 1-(5-phosphoribosyl)-5-[(5-phosphoribosylamino)methylideneamino] imidazole-4-carboxamide isomerase (250 aa).

Aspartate 8 (proton acceptor) is an active-site residue. The active-site Proton donor is the aspartate 129.

The protein belongs to the HisA/HisF family.

The protein resides in the cytoplasm. The catalysed reaction is 1-(5-phospho-beta-D-ribosyl)-5-[(5-phospho-beta-D-ribosylamino)methylideneamino]imidazole-4-carboxamide = 5-[(5-phospho-1-deoxy-D-ribulos-1-ylimino)methylamino]-1-(5-phospho-beta-D-ribosyl)imidazole-4-carboxamide. It functions in the pathway amino-acid biosynthesis; L-histidine biosynthesis; L-histidine from 5-phospho-alpha-D-ribose 1-diphosphate: step 4/9. The sequence is that of 1-(5-phosphoribosyl)-5-[(5-phosphoribosylamino)methylideneamino] imidazole-4-carboxamide isomerase from Desulfovibrio desulfuricans (strain ATCC 27774 / DSM 6949 / MB).